A 180-amino-acid chain; its full sequence is Crossover junction endodeoxyribonuclease RuvC (180 aa).

Catalysis depends on residues Asp-7, Glu-66, and Asp-138. Mg(2+) is bound by residues Asp-7, Glu-66, and Asp-138.

It belongs to the RuvC family. In terms of assembly, homodimer which binds Holliday junction (HJ) DNA. The HJ becomes 2-fold symmetrical on binding to RuvC with unstacked arms; it has a different conformation from HJ DNA in complex with RuvA. In the full resolvosome a probable DNA-RuvA(4)-RuvB(12)-RuvC(2) complex forms which resolves the HJ. It depends on Mg(2+) as a cofactor.

The protein resides in the cytoplasm. The enzyme catalyses Endonucleolytic cleavage at a junction such as a reciprocal single-stranded crossover between two homologous DNA duplexes (Holliday junction).. Its function is as follows. The RuvA-RuvB-RuvC complex processes Holliday junction (HJ) DNA during genetic recombination and DNA repair. Endonuclease that resolves HJ intermediates. Cleaves cruciform DNA by making single-stranded nicks across the HJ at symmetrical positions within the homologous arms, yielding a 5'-phosphate and a 3'-hydroxyl group; requires a central core of homology in the junction. The consensus cleavage sequence is 5'-(A/T)TT(C/G)-3'. Cleavage occurs on the 3'-side of the TT dinucleotide at the point of strand exchange. HJ branch migration catalyzed by RuvA-RuvB allows RuvC to scan DNA until it finds its consensus sequence, where it cleaves and resolves the cruciform DNA. The sequence is that of Crossover junction endodeoxyribonuclease RuvC from Burkholderia pseudomallei (strain 668).